The following is a 99-amino-acid chain: Nucleoid-associated protein EbfC (99 aa).

It belongs to the YbaB/EbfC family. Homodimer.

It is found in the cytoplasm. Its subcellular location is the nucleoid. Binds to DNA and alters its conformation. May be involved in regulation of gene expression, nucleoid organization and DNA protection. This is Nucleoid-associated protein EbfC from Borrelia turicatae (strain 91E135).